A 346-amino-acid polypeptide reads, in one-letter code: Sensor protein kinase GraS (346 aa).

Transmembrane regions (helical) follow at residues 18–38 (IFWI…DYDF) and 43–63 (LFYI…LTFF). Residues 126 to 332 (EFVHDIKTPV…TVKLIFPLQN (207 aa)) enclose the Histidine kinase domain.

Interacts with GraX.

The protein resides in the cell membrane. It carries out the reaction ATP + protein L-histidine = ADP + protein N-phospho-L-histidine.. In terms of biological role, member of the two-component regulatory system GraR/GraS involved in resistance against cationic antimicrobial peptides (CAMPs). Functions as a sensor protein kinase which phosphorylates GraR through the auxiliary protein GraX. In turn, GraR up-regulates many genes such as adhesins, exoproteins, transporters, toxins, and proteins involved in cell wall synthesis. Down-regulates the expression of many genes involved in RNA and amino acid synthesis or glycolysis. This is Sensor protein kinase GraS (graS) from Staphylococcus aureus (strain MRSA252).